The following is a 274-amino-acid chain: D-aminopeptidase (274 aa).

Zn(2+)-binding residues include aspartate 8, glutamate 10, histidine 60, and histidine 104. Histidine 115 functions as the Nucleophile in the catalytic mechanism. Position 133 (glutamate 133) interacts with Zn(2+).

Belongs to the peptidase M55 family. Homodecamer. A 20 Angstroms wide channel runs through the complex, giving access to a central chamber holding the active sites. Zn(2+) is required as a cofactor.

Functionally, hydrolyzes N-terminal residues in D-amino acid containing peptides. Among the tested substrates, the highest activities are with D-Ala-D-Ala and D-Ala-Gly-Gly. The physiological role is not clear. The polypeptide is D-aminopeptidase (dppA) (Bacillus subtilis (strain 168)).